We begin with the raw amino-acid sequence, 985 residues long: Alanine--tRNA ligase, mitochondrial (985 aa).

A mitochondrion-targeting transit peptide spans 1 to 23 (MAASVAAAAGRLRRAIGRSCPWQ). ATP contacts are provided by residues Arg105, His123, Trp205, and 235–237 (LWN). Asn237 and Asp260 together coordinate L-alanine. Gly264 contacts ATP. Positions 632, 636, 749, and 753 each coordinate Zn(2+).

The protein belongs to the class-II aminoacyl-tRNA synthetase family. As to quaternary structure, monomer. It depends on Zn(2+) as a cofactor.

The protein localises to the mitochondrion. It carries out the reaction tRNA(Ala) + L-alanine + ATP = L-alanyl-tRNA(Ala) + AMP + diphosphate. The enzyme catalyses (S)-lactate + ATP + H(+) = (S)-lactoyl-AMP + diphosphate. The catalysed reaction is (S)-lactoyl-AMP + L-lysyl-[protein] = N(6)-[(S)-lactoyl]-L-lysyl-[protein] + AMP + 2 H(+). Functionally, catalyzes the attachment of alanine to tRNA(Ala) in a two-step reaction: alanine is first activated by ATP to form Ala-AMP and then transferred to the acceptor end of tRNA(Ala). Also edits incorrectly charged tRNA(Ala) via its editing domain. In presence of high levels of lactate, also acts as a protein lactyltransferase that mediates lactylation of lysine residues in target proteins, such as CGAS. Acts as an inhibitor of cGAS/STING signaling by catalyzing lactylation of CGAS, preventing the formation of liquid-like droplets in which CGAS is activated. The chain is Alanine--tRNA ligase, mitochondrial (Aars2) from Rattus norvegicus (Rat).